The sequence spans 565 residues: Periplasmic trehalase (565 aa).

A signal peptide spans 1–30 (MKSPAPSRPQKMALIPACIFLCFAALSVQA). Substrate contacts are provided by residues R152, 159 to 160 (WD), N196, 205 to 207 (RSQ), 277 to 279 (RPE), and G310. Active-site proton donor/acceptor residues include D312 and E496. E511 provides a ligand contact to substrate. The disordered stretch occupies residues 539–565 (CDNVPATRPLSESTTQPVKPKEAEPTL).

The protein belongs to the glycosyl hydrolase 37 family. In terms of assembly, monomer.

Its subcellular location is the periplasm. The catalysed reaction is alpha,alpha-trehalose + H2O = alpha-D-glucose + beta-D-glucose. Provides the cells with the ability to utilize trehalose at high osmolarity by splitting it into glucose molecules that can subsequently be taken up by the phosphotransferase-mediated uptake system. The sequence is that of Periplasmic trehalase from Shigella dysenteriae serotype 1 (strain Sd197).